Consider the following 508-residue polypeptide: General transcription factor IIF subunit 1 (508 aa).

Alanine 2 carries the post-translational modification N-acetylalanine. Threonine 156 carries the phosphothreonine modification. Residues 177 to 448 (MQQRRLKDQD…SSGDVQVTED (272 aa)) form a disordered region. A phosphoserine mark is found at serine 217, serine 218, serine 221, and serine 224. Residues 232-251 (SKAKKKAPVTKAGRKKKKKK) show a composition bias toward basic residues. Acidic residues-rich tracts occupy residues 255–270 (DEAF…EGQE) and 303–325 (EQSE…EEEE). Threonine 331 is subject to Phosphothreonine. Residues 343–355 (DDSDSSEESDIDS) are compositionally biased toward acidic residues. The segment covering 364–374 (AKKKTPPKRER) has biased composition (basic residues). Phosphoserine is present on residues serine 377, serine 380, serine 381, and serine 385. Polar residues predominate over residues 378–388 (GGSSKGTSRPG). Threonine 389 is modified (phosphothreonine). Positions 389–406 (TPSAEAASTSSTLRAAAS) are enriched in low complexity. Serine 391 is subject to Phosphoserine. Lysine 407 bears the N6-acetyllysine mark. Polar residues predominate over residues 428–443 (GPQSLSGKSTPSSGDV). Phosphoserine occurs at positions 431, 433, and 436. Threonine 437 is subject to Phosphothreonine. Serine 440 bears the Phosphoserine mark.

It belongs to the TFIIF alpha subunit family. As to quaternary structure, heterodimer of an alpha and a beta subunit. Interacts with GTF2F2, CTDP1, TAF6/TAFII80 and URI1. Interacts with GTF2B (via C-terminus and preferentially via acetylated form); this interaction prevents binding of GTF2B to GTF2F2. Part of TBP-based Pol II pre-initiation complex (PIC), in which Pol II core assembles with general transcription factors and other specific initiation factors including GTF2E1, GTF2E2, GTF2F1, GTF2F2, TCEA1, ERCC2, ERCC3, GTF2H2, GTF2H3, GTF2H4, GTF2H5, GTF2A1, GTF2A2, GTF2B and TBP; this large multi-subunit PIC complex mediates DNA unwinding and targets Pol II core to the transcription start site where the first phosphodiester bond forms. Post-translationally, phosphorylated on Ser and other residues by TAF1 and casein kinase II-like kinases.

It localises to the nucleus. Functionally, TFIIF is a general transcription initiation factor that binds to RNA polymerase II and helps to recruit it to the initiation complex in collaboration with TFIIB. It promotes transcription elongation. In Rattus norvegicus (Rat), this protein is General transcription factor IIF subunit 1 (Gtf2f1).